Here is a 338-residue protein sequence, read N- to C-terminus: Holliday junction branch migration complex subunit RuvB (338 aa).

The tract at residues 4 to 186 (ADRLIAPDNP…FGITQRLEYY (183 aa)) is large ATPase domain (RuvB-L). Residues Ile-25, Arg-26, Gly-67, Lys-70, Thr-71, Thr-72, 133-135 (EDY), Arg-176, Tyr-186, and Arg-223 each bind ATP. Position 71 (Thr-71) interacts with Mg(2+). Positions 187–257 (KVEDLQNIVQ…VADKALNMLD (71 aa)) are small ATPAse domain (RuvB-S). Residues 260–338 (AKGFDYMDRK…HFGIDKPSNR (79 aa)) are head domain (RuvB-H). The DNA site is built by Arg-296, Arg-315, and Arg-320.

The protein belongs to the RuvB family. Homohexamer. Forms an RuvA(8)-RuvB(12)-Holliday junction (HJ) complex. HJ DNA is sandwiched between 2 RuvA tetramers; dsDNA enters through RuvA and exits via RuvB. An RuvB hexamer assembles on each DNA strand where it exits the tetramer. Each RuvB hexamer is contacted by two RuvA subunits (via domain III) on 2 adjacent RuvB subunits; this complex drives branch migration. In the full resolvosome a probable DNA-RuvA(4)-RuvB(12)-RuvC(2) complex forms which resolves the HJ.

The protein localises to the cytoplasm. The catalysed reaction is ATP + H2O = ADP + phosphate + H(+). Its function is as follows. The RuvA-RuvB-RuvC complex processes Holliday junction (HJ) DNA during genetic recombination and DNA repair, while the RuvA-RuvB complex plays an important role in the rescue of blocked DNA replication forks via replication fork reversal (RFR). RuvA specifically binds to HJ cruciform DNA, conferring on it an open structure. The RuvB hexamer acts as an ATP-dependent pump, pulling dsDNA into and through the RuvAB complex. RuvB forms 2 homohexamers on either side of HJ DNA bound by 1 or 2 RuvA tetramers; 4 subunits per hexamer contact DNA at a time. Coordinated motions by a converter formed by DNA-disengaged RuvB subunits stimulates ATP hydrolysis and nucleotide exchange. Immobilization of the converter enables RuvB to convert the ATP-contained energy into a lever motion, pulling 2 nucleotides of DNA out of the RuvA tetramer per ATP hydrolyzed, thus driving DNA branch migration. The RuvB motors rotate together with the DNA substrate, which together with the progressing nucleotide cycle form the mechanistic basis for DNA recombination by continuous HJ branch migration. Branch migration allows RuvC to scan DNA until it finds its consensus sequence, where it cleaves and resolves cruciform DNA. In Vibrio atlanticus (strain LGP32) (Vibrio splendidus (strain Mel32)), this protein is Holliday junction branch migration complex subunit RuvB.